Here is a 540-residue protein sequence, read N- to C-terminus: Chaperonin GroEL (540 aa).

Residues Thr30–Pro33, Asp87–Thr91, Gly414, Asn479–Leu481, and Asp495 contribute to the ATP site.

This sequence belongs to the chaperonin (HSP60) family. In terms of assembly, forms a cylinder of 14 subunits composed of two heptameric rings stacked back-to-back. Interacts with the co-chaperonin GroES.

It is found in the cytoplasm. The enzyme catalyses ATP + H2O + a folded polypeptide = ADP + phosphate + an unfolded polypeptide.. Its function is as follows. Together with its co-chaperonin GroES, plays an essential role in assisting protein folding. The GroEL-GroES system forms a nano-cage that allows encapsulation of the non-native substrate proteins and provides a physical environment optimized to promote and accelerate protein folding. The sequence is that of Chaperonin GroEL from Carboxydothermus hydrogenoformans (strain ATCC BAA-161 / DSM 6008 / Z-2901).